The sequence spans 471 residues: 5-hydroxytryptamine receptor 2A (471 aa).

Residues 1 to 80 are Extracellular-facing; sequence MDILCEENTS…LQEKNWSALL (80 aa). Residues Asn-8, Asn-38, Asn-44, Asn-51, and Asn-54 are each glycosylated (N-linked (GlcNAc...) asparagine). The chain crosses the membrane as a helical span at residues 81-97; sequence TAVVIILTIAGNILVIM. Over 98-111 the chain is Cytoplasmic; that stretch reads AVSLEKKLQNATNY. The chain crosses the membrane as a helical span at residues 112-137; that stretch reads FLMSLAIADMLLGFLVMPVSMLTILY. Over 138–146 the chain is Extracellular; the sequence is GYRWPLPSK. Residues 147 to 171 form a helical membrane-spanning segment; it reads LCAVWIYLDVLFSTASIMHLCAISL. The cysteines at positions 148 and 227 are disulfide-linked. Residue Asp-155 coordinates serotonin. The DRY motif; important for ligand-induced conformation changes motif lies at 172 to 174; the sequence is DRY. The Cytoplasmic segment spans residues 172–191; it reads DRYVAIQNPIHHSRFNSRTK. The chain crosses the membrane as a helical span at residues 192 to 215; that stretch reads AFLKIIAVWTISVGISMPIPVFGL. Residues 216–232 are Extracellular-facing; it reads QDDSKVFKEGSCLLADD. Residues 233-258 form a helical membrane-spanning segment; the sequence is NFVLIGSFVSFFIPLTIMVITYFLTI. The Cytoplasmic portion of the chain corresponds to 259–322; that stretch reads KSLQKEATLC…QSISNEQKAC (64 aa). At Ser-280 the chain carries Phosphoserine. Residues 323 to 348 traverse the membrane as a helical segment; that stretch reads KVLGIVFFLFVVMWCPFFITNIMAVI. Asn-343 is a serotonin binding site. Residues Cys-349 and Cys-353 are joined by a disulfide bond. Topologically, residues 349–356 are extracellular; it reads CKESCNED. The chain crosses the membrane as a helical span at residues 357–382; that stretch reads VIGALLNVFVWIGYLSSAVNPLVYTL. The NPxxY motif; important for ligand-induced conformation changes and signaling signature appears at 376–380; it reads NPLVY. Topologically, residues 383 to 471 are cytoplasmic; it reads FNKTYRSAFS…DGVNEKVSCV (89 aa). The tract at residues 450–471 is disordered; that stretch reads KQHSEDASKDNSDGVNEKVSCV. Over residues 451–465 the composition is skewed to basic and acidic residues; that stretch reads QHSEDASKDNSDGVN. Positions 469–471 match the PDZ-binding motif; sequence SCV.

It belongs to the G-protein coupled receptor 1 family. In terms of assembly, interacts (via C-terminus) with MPDZ and PATJ. May interact (via C-terminus) with MPP3, PRDX6, DLG4, DLG1, CASK, APBA1 and MAGI2. Interacts with GRM2 and DRD2; this may affect signaling.

Its subcellular location is the cell membrane. The protein resides in the cell projection. The protein localises to the dendrite. It is found in the axon. It localises to the cytoplasmic vesicle. Its subcellular location is the membrane. The protein resides in the caveola. The protein localises to the presynapse. G-protein coupled receptor activity is regulated by lipids: oleamide increases HTR2A-mediated activity. In terms of biological role, G-protein coupled receptor for 5-hydroxytryptamine (serotonin). Also functions as a receptor for various drugs and psychoactive substances, including mescaline, psilocybin, 1-(2,5-dimethoxy-4-iodophenyl)-2-aminopropane (DOI) and lysergic acid diethylamide (LSD). Ligand binding causes a conformation change that triggers signaling via guanine nucleotide-binding proteins (G proteins) and modulates the activity of downstream effectors. HTR2A is coupled to G(q)/G(11) G alpha proteins and activates phospholipase C-beta, releasing diacylglycerol (DAG) and inositol 1,4,5-trisphosphate (IP3) second messengers that modulate the activity of phosphatidylinositol 3-kinase and promote the release of Ca(2+) ions from intracellular stores, respectively. Beta-arrestin family members inhibit signaling via G proteins and mediate activation of alternative signaling pathways. Affects neural activity, perception, cognition and mood. Plays a role in the regulation of behavior, including responses to anxiogenic situations and psychoactive substances. Plays a role in intestinal smooth muscle contraction, and may play a role in arterial vasoconstriction. The sequence is that of 5-hydroxytryptamine receptor 2A (HTR2A) from Macaca mulatta (Rhesus macaque).